The primary structure comprises 353 residues: 3-dehydroquinate synthase (353 aa).

It belongs to the archaeal-type DHQ synthase family.

It carries out the reaction 2-amino-2,3,7-trideoxy-D-lyxo-hept-6-ulosonate + NAD(+) + H2O = 3-dehydroquinate + NH4(+) + NADH + H(+). Its function is as follows. Catalyzes the oxidative deamination and cyclization of 2-amino-3,7-dideoxy-D-threo-hept-6-ulosonic acid (ADH) to yield 3-dehydroquinate (DHQ), which is fed into the canonical shikimic pathway of aromatic amino acid biosynthesis. The protein is 3-dehydroquinate synthase of Nitrosopumilus maritimus (strain SCM1).